Reading from the N-terminus, the 287-residue chain is Aspartate dehydrogenase domain-containing protein (287 aa).

Residues serine 24 and serine 172 each carry the phosphoserine modification.

Belongs to the L-aspartate dehydrogenase family.

The protein is Aspartate dehydrogenase domain-containing protein of Mus musculus (Mouse).